The following is a 123-amino-acid chain: MTDRILYIVSNMSSVPWEGSAAAAVPATSPPTPGHYHVLYRGCGETQVGWHGETYCLVGGYRVHGDAPLATPTKAEAEKPAPRRAPKRRQATIESDKDLGCSSPKIRRLEHRGRRLTPQKLAG.

Residues 67–123 (APLATPTKAEAEKPAPRRAPKRRQATIESDKDLGCSSPKIRRLEHRGRRLTPQKLAG) form a disordered region. Over residues 105–117 (KIRRLEHRGRRLT) the composition is skewed to basic residues.

The polypeptide is DPEP2 neighbor protein (Homo sapiens (Human)).